Reading from the N-terminus, the 341-residue chain is UDP-3-O-acylglucosamine N-acyltransferase (341 aa).

The active-site Proton acceptor is His239.

It belongs to the transferase hexapeptide repeat family. LpxD subfamily. Homotrimer.

It catalyses the reaction a UDP-3-O-[(3R)-3-hydroxyacyl]-alpha-D-glucosamine + a (3R)-hydroxyacyl-[ACP] = a UDP-2-N,3-O-bis[(3R)-3-hydroxyacyl]-alpha-D-glucosamine + holo-[ACP] + H(+). It functions in the pathway bacterial outer membrane biogenesis; LPS lipid A biosynthesis. Its function is as follows. Catalyzes the N-acylation of UDP-3-O-acylglucosamine using 3-hydroxyacyl-ACP as the acyl donor. Is involved in the biosynthesis of lipid A, a phosphorylated glycolipid that anchors the lipopolysaccharide to the outer membrane of the cell. The chain is UDP-3-O-acylglucosamine N-acyltransferase from Shewanella sp. (strain MR-7).